Consider the following 273-residue polypeptide: Large ribosomal subunit protein uL2 (273 aa).

The segment at 221 to 273 (RGTAMNPVDHPHGGGEGRNFGKHPVTPWGVQTKGKKTRHNKRTDKFIVRRRGK) is disordered. Positions 253-273 (KGKKTRHNKRTDKFIVRRRGK) are enriched in basic residues.

Belongs to the universal ribosomal protein uL2 family. As to quaternary structure, part of the 50S ribosomal subunit. Forms a bridge to the 30S subunit in the 70S ribosome.

In terms of biological role, one of the primary rRNA binding proteins. Required for association of the 30S and 50S subunits to form the 70S ribosome, for tRNA binding and peptide bond formation. It has been suggested to have peptidyltransferase activity; this is somewhat controversial. Makes several contacts with the 16S rRNA in the 70S ribosome. The chain is Large ribosomal subunit protein uL2 from Glaesserella parasuis serovar 5 (strain SH0165) (Haemophilus parasuis).